Here is a 673-residue protein sequence, read N- to C-terminus: Capsid protein (673 aa).

The tract at residues 575–595 (NLPTDSSLESDSDSEPAPKKK) is disordered.

Belongs to the anelloviridae capsid protein family.

The protein localises to the virion. Its function is as follows. Self-assembles to form an icosahedral capsid with a T=1 symmetry, about 30 nm in diameter, and consisting of 60 capsid proteins. The capsid encapsulates the genomic DNA. Capsid protein is involved in attachment and entry into the host cell. This Homo sapiens (Human) protein is Capsid protein.